Reading from the N-terminus, the 78-residue chain is Rubredoxin (78 aa).

In terms of domain architecture, Rubredoxin-like spans 23-74 (DARLECKICWWEYDPEVGDPVWQIAPGTSFSALPAHWRCPNCDGEAEQFMVL). 4 residues coordinate Fe cation: C28, C31, C61, and C64.

Belongs to the rubredoxin family. Requires Fe(3+) as cofactor.

Its function is as follows. Rubredoxin is a small nonheme, iron protein lacking acid-labile sulfide. Its single Fe, chelated to 4 Cys, functions as an electron acceptor and may also stabilize the conformation of the molecule. Could be involved in hydrogenase-linked redox processes. This is Rubredoxin (hoxR) from Cupriavidus necator (strain ATCC 17699 / DSM 428 / KCTC 22496 / NCIMB 10442 / H16 / Stanier 337) (Ralstonia eutropha).